The sequence spans 150 residues: Cytochrome c oxidase subunit 5A, mitochondrial (150 aa).

The transit peptide at 1 to 41 (MLGAALRRCAVAATTRAGPRGLLHSARTPGPAAAIQSVRCY) directs the protein to the mitochondrion. The short motif at 2 to 17 (LGAALRRCAVAATTRA) is the SIFI-degron element. N6-acetyllysine is present on residues Lys-87 and Lys-113. Thr-141 carries the post-translational modification Phosphothreonine.

It belongs to the cytochrome c oxidase subunit 5A family. In terms of assembly, component of the cytochrome c oxidase (complex IV, CIV), a multisubunit enzyme composed of 14 subunits. The complex is composed of a catalytic core of 3 subunits MT-CO1, MT-CO2 and MT-CO3, encoded in the mitochondrial DNA, and 11 supernumerary subunits COX4I, COX5A, COX5B, COX6A, COX6B, COX6C, COX7A, COX7B, COX7C, COX8 and NDUFA4, which are encoded in the nuclear genome. The complex exists as a monomer or a dimer and forms supercomplexes (SCs) in the inner mitochondrial membrane with NADH-ubiquinone oxidoreductase (complex I, CI) and ubiquinol-cytochrome c oxidoreductase (cytochrome b-c1 complex, complex III, CIII), resulting in different assemblies (supercomplex SCI(1)III(2)IV(1) and megacomplex MCI(2)III(2)IV(2)). Interacts with AFG1L. Interacts with RAB5IF. In terms of processing, in response to mitochondrial stress, the precursor protein is ubiquitinated by the SIFI complex in the cytoplasm before mitochondrial import, leading to its degradation. Within the SIFI complex, UBR4 initiates ubiquitin chain that are further elongated or branched by KCMF1.

The protein resides in the mitochondrion inner membrane. Its pathway is energy metabolism; oxidative phosphorylation. Functionally, component of the cytochrome c oxidase, the last enzyme in the mitochondrial electron transport chain which drives oxidative phosphorylation. The respiratory chain contains 3 multisubunit complexes succinate dehydrogenase (complex II, CII), ubiquinol-cytochrome c oxidoreductase (cytochrome b-c1 complex, complex III, CIII) and cytochrome c oxidase (complex IV, CIV), that cooperate to transfer electrons derived from NADH and succinate to molecular oxygen, creating an electrochemical gradient over the inner membrane that drives transmembrane transport and the ATP synthase. Cytochrome c oxidase is the component of the respiratory chain that catalyzes the reduction of oxygen to water. Electrons originating from reduced cytochrome c in the intermembrane space (IMS) are transferred via the dinuclear copper A center (CU(A)) of subunit 2 and heme A of subunit 1 to the active site in subunit 1, a binuclear center (BNC) formed by heme A3 and copper B (CU(B)). The BNC reduces molecular oxygen to 2 water molecules using 4 electrons from cytochrome c in the IMS and 4 protons from the mitochondrial matrix. This is Cytochrome c oxidase subunit 5A, mitochondrial (COX5A) from Pan troglodytes (Chimpanzee).